A 180-amino-acid chain; its full sequence is UPF0227 protein YcfP (180 aa).

Belongs to the UPF0227 family.

The sequence is that of UPF0227 protein YcfP from Salmonella paratyphi A (strain ATCC 9150 / SARB42).